A 428-amino-acid chain; its full sequence is Chaperone SurA (428 aa).

A signal peptide spans 1–20 (MKNWKTLLLGIAMIANTSFA). 2 PpiC domains span residues 171–272 (STEL…KVND) and 282–382 (VTEV…ELLD).

Its subcellular location is the periplasm. The catalysed reaction is [protein]-peptidylproline (omega=180) = [protein]-peptidylproline (omega=0). Its function is as follows. Chaperone involved in the correct folding and assembly of outer membrane proteins. Recognizes specific patterns of aromatic residues and the orientation of their side chains, which are found more frequently in integral outer membrane proteins. May act in both early periplasmic and late outer membrane-associated steps of protein maturation. In Escherichia coli O157:H7, this protein is Chaperone SurA.